The following is a 197-amino-acid chain: ATP-dependent Clp protease proteolytic subunit (197 aa).

S102 (nucleophile) is an active-site residue. The active site involves H127.

Belongs to the peptidase S14 family. In terms of assembly, fourteen ClpP subunits assemble into 2 heptameric rings which stack back to back to give a disk-like structure with a central cavity, resembling the structure of eukaryotic proteasomes.

The protein resides in the cytoplasm. The enzyme catalyses Hydrolysis of proteins to small peptides in the presence of ATP and magnesium. alpha-casein is the usual test substrate. In the absence of ATP, only oligopeptides shorter than five residues are hydrolyzed (such as succinyl-Leu-Tyr-|-NHMec, and Leu-Tyr-Leu-|-Tyr-Trp, in which cleavage of the -Tyr-|-Leu- and -Tyr-|-Trp bonds also occurs).. Functionally, cleaves peptides in various proteins in a process that requires ATP hydrolysis. Has a chymotrypsin-like activity. Plays a major role in the degradation of misfolded proteins. The polypeptide is ATP-dependent Clp protease proteolytic subunit (Buchnera aphidicola subsp. Schizaphis graminum (strain Sg)).